The sequence spans 467 residues: Acyl-CoA-binding domain-containing protein 5 (467 aa).

The region spanning 8-97 (HQTRFEAAVS…MKKIIETMPV (90 aa)) is the ACB domain. An acyl-CoA-binding positions include 19–28 (IQSLPKNGSF), 39–43 (YSFYK), Lys65, and Tyr84. Disordered stretches follow at residues 119 to 204 (KHGR…IVLN), 219 to 240 (TPLPTKCLSEPGDNVAIPEGEP), and 304 to 376 (ITEN…DRGP). The segment covering 125-139 (GVTSELGSVLTSTPN) has biased composition (polar residues). The segment covering 170-187 (DEEDEEDETEHSEEEEKE) has biased composition (acidic residues). Basic and acidic residues-rich tracts occupy residues 312-322 (ELKDGGEDGKQ) and 335-347 (KSEHFSSRRERSL). Residues 352-372 (GGEGSRSGQIGSSGDGDGWGS) show a composition bias toward gly residues. Residues 382-411 (EQIAVVLMRLQEDMQNVLQRLHSLEVQTAS) adopt a coiled-coil conformation. A helical transmembrane segment spans residues 439–459 (GTLALAVVWPFVVHWLMHVFL).

This sequence belongs to the ATG37 family.

It localises to the peroxisome membrane. Functionally, acyl-CoA binding protein which acts as the peroxisome receptor for pexophagy but is dispensable for aggrephagy and nonselective autophagy. Binds medium- and long-chain acyl-CoA esters. The polypeptide is Acyl-CoA-binding domain-containing protein 5 (acbd5) (Xenopus laevis (African clawed frog)).